The primary structure comprises 572 residues: DBH-like monooxygenase protein 2 homolog (572 aa).

Positions 1-26 are cleaved as a signal peptide; sequence MGTCLKGNMSVLSLVLFLLSVQQFWA. Asn8, Asn64, Asn187, and Asn203 each carry an N-linked (GlcNAc...) asparagine glycan. At 27–552 the chain is on the extracellular side; sequence QEDPLLPFSE…SPPEPCVRAC (526 aa). In terms of domain architecture, DOMON spans 42 to 157; it reads HNVQLKWGFD…LPMKLIYAYG (116 aa). The active site involves Tyr207. Intrachain disulfides connect Cys209–Cys256 and Cys244–Cys263. Cu cation is bound by residues His237 and His238. His301 lines the Cu cation pocket. Residue Asn306 is glycosylated (N-linked (GlcNAc...) asparagine). Intrachain disulfides connect Cys358–Cys472 and Cys435–Cys457. The active site involves His381. Residues His381, His383, and Met456 each contribute to the Cu cation site. Residues Asn468, Asn503, Asn518, and Asn534 are each glycosylated (N-linked (GlcNAc...) asparagine). The chain crosses the membrane as a helical span at residues 553–571; that stretch reads ATKNLAFMSLFLCLAGMWA. Ser572 is a topological domain (cytoplasmic).

The protein belongs to the copper type II ascorbate-dependent monooxygenase family. It depends on Cu(2+) as a cofactor.

The protein localises to the membrane. The protein is DBH-like monooxygenase protein 2 homolog (moxd2) of Danio rerio (Zebrafish).